The sequence spans 324 residues: 4-hydroxy-3-methylbut-2-enyl diphosphate reductase (324 aa).

C13 serves as a coordination point for [4Fe-4S] cluster. 2 residues coordinate (2E)-4-hydroxy-3-methylbut-2-enyl diphosphate: H41 and H75. Dimethylallyl diphosphate contacts are provided by H41 and H75. 2 residues coordinate isopentenyl diphosphate: H41 and H75. [4Fe-4S] cluster is bound at residue C97. H125 serves as a coordination point for (2E)-4-hydroxy-3-methylbut-2-enyl diphosphate. Dimethylallyl diphosphate is bound at residue H125. An isopentenyl diphosphate-binding site is contributed by H125. E127 serves as the catalytic Proton donor. Residue T168 participates in (2E)-4-hydroxy-3-methylbut-2-enyl diphosphate binding. C225 contacts [4Fe-4S] cluster. 4 residues coordinate (2E)-4-hydroxy-3-methylbut-2-enyl diphosphate: S253, S254, N255, and S302. Dimethylallyl diphosphate-binding residues include S253, S254, N255, and S302. 4 residues coordinate isopentenyl diphosphate: S253, S254, N255, and S302.

This sequence belongs to the IspH family. Requires [4Fe-4S] cluster as cofactor.

The catalysed reaction is isopentenyl diphosphate + 2 oxidized [2Fe-2S]-[ferredoxin] + H2O = (2E)-4-hydroxy-3-methylbut-2-enyl diphosphate + 2 reduced [2Fe-2S]-[ferredoxin] + 2 H(+). It carries out the reaction dimethylallyl diphosphate + 2 oxidized [2Fe-2S]-[ferredoxin] + H2O = (2E)-4-hydroxy-3-methylbut-2-enyl diphosphate + 2 reduced [2Fe-2S]-[ferredoxin] + 2 H(+). It participates in isoprenoid biosynthesis; dimethylallyl diphosphate biosynthesis; dimethylallyl diphosphate from (2E)-4-hydroxy-3-methylbutenyl diphosphate: step 1/1. The protein operates within isoprenoid biosynthesis; isopentenyl diphosphate biosynthesis via DXP pathway; isopentenyl diphosphate from 1-deoxy-D-xylulose 5-phosphate: step 6/6. Its function is as follows. Catalyzes the conversion of 1-hydroxy-2-methyl-2-(E)-butenyl 4-diphosphate (HMBPP) into a mixture of isopentenyl diphosphate (IPP) and dimethylallyl diphosphate (DMAPP). Acts in the terminal step of the DOXP/MEP pathway for isoprenoid precursor biosynthesis. This chain is 4-hydroxy-3-methylbut-2-enyl diphosphate reductase, found in Chlorobium limicola (strain DSM 245 / NBRC 103803 / 6330).